Reading from the N-terminus, the 194-residue chain is MRQAEIERNTFETKIKLSLNLDAQDPVDIQTGVGFFDHMLTLFARHGRMSLVVKADGDLWVDSHHTVEDVGIVLGQALKEALGDKAGINRYGTSFVPMDETLGMASLDLSGRSFLVFDASFDNPKLGNFDTELIEEFFQALAFNVQMNLHLKILHGKNNHHKSESLFKATGRALREAITVNPDIHGVNSTKGML.

It belongs to the imidazoleglycerol-phosphate dehydratase family.

Its subcellular location is the cytoplasm. The enzyme catalyses D-erythro-1-(imidazol-4-yl)glycerol 3-phosphate = 3-(imidazol-4-yl)-2-oxopropyl phosphate + H2O. The protein operates within amino-acid biosynthesis; L-histidine biosynthesis; L-histidine from 5-phospho-alpha-D-ribose 1-diphosphate: step 6/9. In Streptococcus thermophilus (strain ATCC BAA-491 / LMD-9), this protein is Imidazoleglycerol-phosphate dehydratase.